We begin with the raw amino-acid sequence, 145 residues long: Galectin-5 (145 aa).

An N-acetylserine modification is found at Ser2. Residues 17–145 (FFTSIPNGLY…GDIQLTHVET (129 aa)) form the Galectin domain. An a beta-D-galactoside-binding site is contributed by 77-83 (WGPEERS).

In terms of assembly, monomer. In terms of tissue distribution, erythrocytes.

In terms of biological role, may function in erythrocyte differentiation. In Rattus norvegicus (Rat), this protein is Galectin-5 (Lgals5).